The sequence spans 485 residues: Glutamyl-tRNA(Gln) amidotransferase subunit A (485 aa).

Active-site charge relay system residues include K79 and S154. S178 serves as the catalytic Acyl-ester intermediate.

The protein belongs to the amidase family. GatA subfamily. In terms of assembly, heterotrimer of A, B and C subunits.

The catalysed reaction is L-glutamyl-tRNA(Gln) + L-glutamine + ATP + H2O = L-glutaminyl-tRNA(Gln) + L-glutamate + ADP + phosphate + H(+). Its function is as follows. Allows the formation of correctly charged Gln-tRNA(Gln) through the transamidation of misacylated Glu-tRNA(Gln) in organisms which lack glutaminyl-tRNA synthetase. The reaction takes place in the presence of glutamine and ATP through an activated gamma-phospho-Glu-tRNA(Gln). This Bacillus velezensis (strain DSM 23117 / BGSC 10A6 / LMG 26770 / FZB42) (Bacillus amyloliquefaciens subsp. plantarum) protein is Glutamyl-tRNA(Gln) amidotransferase subunit A.